The chain runs to 222 residues: RNA chaperone ProQ (222 aa).

Basic and acidic residues predominate over residues 94 to 113; it reads EHADHAKQQLDESKAKAAEK. The tract at residues 94-171 is disordered; the sequence is EHADHAKQQL…PAKLTDSDLQ (78 aa). Positions 114 to 131 are enriched in basic residues; the sequence is RKAKLAQQPKRKDKRQFN. The span at 133–148 shows a compositional bias: basic and acidic residues; it reads PKGEKSANSDHADTKR. A compositionally biased stretch (low complexity) spans 155 to 164; it reads NRPNTTPPAK.

The protein belongs to the ProQ family.

The protein resides in the cytoplasm. Its function is as follows. RNA chaperone with significant RNA binding, RNA strand exchange and RNA duplexing activities. In Alteromonas mediterranea (strain DSM 17117 / CIP 110805 / LMG 28347 / Deep ecotype), this protein is RNA chaperone ProQ.